Reading from the N-terminus, the 233-residue chain is Protein Thf1 (233 aa).

A coiled-coil region spans residues 183–205; the sequence is DKLSKDLELYRSNLDKMTQALAV. The interval 213–233 is disordered; sequence DRKKREQRQQQASTPVAPPNE.

This sequence belongs to the THF1 family.

Its function is as follows. May be involved in photosynthetic membrane biogenesis. The chain is Protein Thf1 from Trichormus variabilis (strain ATCC 29413 / PCC 7937) (Anabaena variabilis).